A 122-amino-acid chain; its full sequence is Large ribosomal subunit protein uL14 (122 aa).

Belongs to the universal ribosomal protein uL14 family. In terms of assembly, part of the 50S ribosomal subunit. Forms a cluster with proteins L3 and L19. In the 70S ribosome, L14 and L19 interact and together make contacts with the 16S rRNA in bridges B5 and B8.

Its function is as follows. Binds to 23S rRNA. Forms part of two intersubunit bridges in the 70S ribosome. This chain is Large ribosomal subunit protein uL14, found in Acinetobacter baylyi (strain ATCC 33305 / BD413 / ADP1).